A 113-amino-acid polypeptide reads, in one-letter code: Hydrogenase maturation factor HypA 1 (113 aa).

Residue H2 coordinates Ni(2+). Residues C73, C76, C89, and C92 each coordinate Zn(2+).

It belongs to the HypA/HybF family.

Involved in the maturation of [NiFe] hydrogenases. Required for nickel insertion into the metal center of the hydrogenase. The sequence is that of Hydrogenase maturation factor HypA 1 from Bradyrhizobium diazoefficiens (strain JCM 10833 / BCRC 13528 / IAM 13628 / NBRC 14792 / USDA 110).